We begin with the raw amino-acid sequence, 157 residues long: Lipoprotein signal peptidase (157 aa).

A run of 3 helical transmembrane segments spans residues 10-30 (LIFIVVFSLIFGTDQAIKYAI), 58-78 (FLEGGLKYLQILLILGLFIFL), and 84-104 (LFKNHAIEFGMVFGAGVSNVL). Catalysis depends on residues D114 and D131. Residues 122–142 (FDFAIFNFADVMIDVGVGVLL) form a helical membrane-spanning segment.

It belongs to the peptidase A8 family.

The protein resides in the cell inner membrane. The catalysed reaction is Release of signal peptides from bacterial membrane prolipoproteins. Hydrolyzes -Xaa-Yaa-Zaa-|-(S,diacylglyceryl)Cys-, in which Xaa is hydrophobic (preferably Leu), and Yaa (Ala or Ser) and Zaa (Gly or Ala) have small, neutral side chains.. The protein operates within protein modification; lipoprotein biosynthesis (signal peptide cleavage). Functionally, this protein specifically catalyzes the removal of signal peptides from prolipoproteins. The polypeptide is Lipoprotein signal peptidase (Helicobacter pylori (strain Shi470)).